The sequence spans 382 residues: E3 ubiquitin-protein ligase RNF133 (382 aa).

The 103-residue stretch at 65-167 folds into the PA domain; sequence SSILKRVAGV…IKGMEILHLI (103 aa). Residues 190-210 form a helical membrane-spanning segment; that stretch reads YFVSFMIVTTATLAYFTFYHI. The RING-type; atypical zinc-finger motif lies at 256–297; sequence CVICFEAYKPNEIVRILTCKHFFHKNCIDPWILAHGTCPMCK. Positions 328–382 are disordered; the sequence is TLSPVEEETNYELPPARTSSKVTHVQEHPTSSANAGSQPPEAEETSHPSHGQQVL. Polar residues predominate over residues 344–364; it reads RTSSKVTHVQEHPTSSANAGS.

In terms of assembly, interacts with E3 ligase UBE2J1. In terms of processing, auto-ubiquitinated. In terms of tissue distribution, expression is testis-specific.

The protein resides in the endoplasmic reticulum membrane. The catalysed reaction is S-ubiquitinyl-[E2 ubiquitin-conjugating enzyme]-L-cysteine + [acceptor protein]-L-lysine = [E2 ubiquitin-conjugating enzyme]-L-cysteine + N(6)-ubiquitinyl-[acceptor protein]-L-lysine.. The protein operates within protein modification; protein ubiquitination. Has E3 ubiquitin-protein ligase activity. Plays a role in male fecundity through the interaction with the E2 ubituitin-protein ligase UBE2J1. This Mus musculus (Mouse) protein is E3 ubiquitin-protein ligase RNF133 (Rnf133).